A 956-amino-acid polypeptide reads, in one-letter code: Phosphatidylinositol 4-kinase PIK1a (956 aa).

One can recognise a PIK helical domain in the interval M1 to L120. Residues S545–S573 form a disordered region. The 282-residue stretch at E658 to M939 folds into the PI3K/PI4K catalytic domain. Residues K664 to S670 are G-loop. A catalytic loop region spans residues Q805 to N813. The activation loop stretch occupies residues H824–T848.

This sequence belongs to the PI3/PI4-kinase family. Type III PI4K subfamily.

It is found in the nucleus. It catalyses the reaction a 1,2-diacyl-sn-glycero-3-phospho-(1D-myo-inositol) + ATP = a 1,2-diacyl-sn-glycero-3-phospho-(1D-myo-inositol 4-phosphate) + ADP + H(+). In terms of biological role, acts on phosphatidylinositol (PI) in the first committed step in the production of the second messenger inositol 1,4,5,-trisphosphate. This Candida albicans (strain SC5314 / ATCC MYA-2876) (Yeast) protein is Phosphatidylinositol 4-kinase PIK1a (PIKA).